The following is a 427-amino-acid chain: Thymidine phosphorylase (427 aa).

The protein belongs to the thymidine/pyrimidine-nucleoside phosphorylase family. As to quaternary structure, homodimer.

It catalyses the reaction thymidine + phosphate = 2-deoxy-alpha-D-ribose 1-phosphate + thymine. In terms of biological role, the enzymes which catalyze the reversible phosphorolysis of pyrimidine nucleosides are involved in the degradation of these compounds and in their utilization as carbon and energy sources, or in the rescue of pyrimidine bases for nucleotide synthesis. In Mycobacterium tuberculosis (strain CDC 1551 / Oshkosh), this protein is Thymidine phosphorylase (deoA).